The following is an 83-amino-acid chain: MADAAPADVKKLSFERAMEELETIVKRLEDGKVPLEESVAIYERGEALKRRCEELLRQAEARVDKITTDAQGQPVGTEPLDVQ.

The protein belongs to the XseB family. As to quaternary structure, heterooligomer composed of large and small subunits.

It localises to the cytoplasm. The enzyme catalyses Exonucleolytic cleavage in either 5'- to 3'- or 3'- to 5'-direction to yield nucleoside 5'-phosphates.. Its function is as follows. Bidirectionally degrades single-stranded DNA into large acid-insoluble oligonucleotides, which are then degraded further into small acid-soluble oligonucleotides. This Rhodopseudomonas palustris (strain HaA2) protein is Exodeoxyribonuclease 7 small subunit.